The chain runs to 114 residues: UPF0757 protein YmgG (114 aa).

The protein belongs to the UPF0757 family.

In Edwardsiella ictaluri (strain 93-146), this protein is UPF0757 protein YmgG.